The sequence spans 1048 residues: Anguibactin system regulator (1048 aa).

In terms of domain architecture, Carrier spans 965–1039; sequence PIITASEDRV…AFAIIMDRCR (75 aa).

This sequence belongs to the ATP-dependent AMP-binding enzyme family.

It functions in the pathway siderophore biosynthesis; anguibactin biosynthesis. In terms of biological role, bifunctional protein that plays an essential role in virulence. Plays a role in both production of the siderophore anguibactin and regulation of iron transport genes. The chain is Anguibactin system regulator (angR) from Vibrio anguillarum (strain ATCC 68554 / 775) (Listonella anguillarum).